A 296-amino-acid chain; its full sequence is MDASDTPTHPAPHPADPAATPYGAPTTPPRPLRSRFTVRDVAAAKNRGEKWSMLTAYDATTAAVFDEAEIPVLLVGDSAANVVYGYDTTVPITVDELLPLVRAVVRGAPHAMVVADLPFGSYQGGPAEALASATRFLKEGGAHAVKLEGGSRVVRAVDALVGAGIPVIGHLGLTPQSIHTIGGYRVQGRDEAGEILLADALALEAAGAFAVVLEVVPADLATRVTKELRIATVGIGAGSGCDAQVLVWQDMAGLSGGRTPRFVKRYADLRTILADAARAYRADVRDGRYPTIEHSY.

The interval 1 to 33 (MDASDTPTHPAPHPADPAATPYGAPTTPPRPLR) is disordered. Residues 16 to 25 (DPAATPYGAP) are compositionally biased toward low complexity. Positions 77 and 116 each coordinate Mg(2+). Residues 77–78 (DS), Asp116, and Lys146 contribute to the 3-methyl-2-oxobutanoate site. Glu148 is a Mg(2+) binding site. The active-site Proton acceptor is the Glu214.

The protein belongs to the PanB family. As to quaternary structure, homodecamer; pentamer of dimers. Mg(2+) serves as cofactor.

The protein localises to the cytoplasm. The catalysed reaction is 3-methyl-2-oxobutanoate + (6R)-5,10-methylene-5,6,7,8-tetrahydrofolate + H2O = 2-dehydropantoate + (6S)-5,6,7,8-tetrahydrofolate. It participates in cofactor biosynthesis; (R)-pantothenate biosynthesis; (R)-pantoate from 3-methyl-2-oxobutanoate: step 1/2. Functionally, catalyzes the reversible reaction in which hydroxymethyl group from 5,10-methylenetetrahydrofolate is transferred onto alpha-ketoisovalerate to form ketopantoate. This Frankia casuarinae (strain DSM 45818 / CECT 9043 / HFP020203 / CcI3) protein is 3-methyl-2-oxobutanoate hydroxymethyltransferase.